Here is a 109-residue protein sequence, read N- to C-terminus: Staphostatin B (109 aa).

The segment at 97 to 101 is binds to staphopain B; the sequence is IGTSR.

Belongs to the protease inhibitor I57 (SspC) family. Forms a stable non-covalent complex with prematurely activated/folded SspB.

It localises to the cytoplasm. Its function is as follows. Specifically inhibits the cysteine protease staphopain B (SspB) by blocking the active site of the enzyme. Probably required to protect cytoplasmic proteins from being degraded by prematurely activated/folded prostaphopain B. Also involved in growth capacity, viability and bacterial morphology. This is Staphostatin B (sspC) from Staphylococcus aureus (strain NCTC 8325 / PS 47).